The following is a 37-amino-acid chain: Potassium channel toxin alpha-KTx 4.8 (37 aa).

2 disulfide bridges follow: C13–C33 and C17–C35.

It belongs to the short scorpion toxin superfamily. Potassium channel inhibitor family. Alpha-KTx 04 subfamily. In terms of tissue distribution, expressed by the venom gland.

It is found in the secreted. Its function is as follows. Reversible blocker of voltage-gated potassium channel Kv1.2/KCNA2 (Kd=65 nM) and calcium-activated potassium channels KCa2.2/KCNN2 (Kd=575 nM) and KCa3.1/KCNN4 (Kd=59 nM). The sequence is that of Potassium channel toxin alpha-KTx 4.8 from Centruroides margaritatus (Central American bark Scorpion).